A 245-amino-acid chain; its full sequence is Uracil-DNA glycosylase (245 aa).

Asp-82 functions as the Proton acceptor in the catalytic mechanism.

The protein belongs to the uracil-DNA glycosylase (UDG) superfamily. UNG family.

Its subcellular location is the cytoplasm. The enzyme catalyses Hydrolyzes single-stranded DNA or mismatched double-stranded DNA and polynucleotides, releasing free uracil.. In terms of biological role, excises uracil residues from the DNA which can arise as a result of misincorporation of dUMP residues by DNA polymerase or due to deamination of cytosine. In Deinococcus geothermalis (strain DSM 11300 / CIP 105573 / AG-3a), this protein is Uracil-DNA glycosylase.